Here is a 607-residue protein sequence, read N- to C-terminus: Siderophore iron transporter mirC (607 aa).

12 consecutive transmembrane segments (helical) span residues 67 to 89, 129 to 148, 186 to 208, 223 to 245, 279 to 301, 311 to 328, 349 to 368, 388 to 410, 417 to 436, 446 to 468, 481 to 503, and 557 to 574; these read LVIA…QTIM, VFGR…LGYI, SLLN…VWIG, WGYG…SLLL, IFGL…LAAN, IVAM…LPFW, TALA…YFSV, GRVT…ILIK, VYVT…MLLY, VLGT…QLGV, TAMF…GAVW, and LLVL…LSLL. Basic and acidic residues predominate over residues 584 to 593; sequence SESSDHDDAS. The interval 584–607 is disordered; it reads SESSDHDDASPRNGLGPGERAKRT.

It belongs to the major facilitator superfamily.

It is found in the membrane. In Emericella nidulans (strain FGSC A4 / ATCC 38163 / CBS 112.46 / NRRL 194 / M139) (Aspergillus nidulans), this protein is Siderophore iron transporter mirC (mirC).